We begin with the raw amino-acid sequence, 692 residues long: Elongation factor G (692 aa).

Residues 8 to 282 (ENTRNIGIMA…AVIDYLPSPL (275 aa)) form the tr-type G domain. Residues 17–24 (AHIDAGKT), 81–85 (DTPGH), and 135–138 (NKMD) contribute to the GTP site.

This sequence belongs to the TRAFAC class translation factor GTPase superfamily. Classic translation factor GTPase family. EF-G/EF-2 subfamily.

The protein resides in the cytoplasm. Its function is as follows. Catalyzes the GTP-dependent ribosomal translocation step during translation elongation. During this step, the ribosome changes from the pre-translocational (PRE) to the post-translocational (POST) state as the newly formed A-site-bound peptidyl-tRNA and P-site-bound deacylated tRNA move to the P and E sites, respectively. Catalyzes the coordinated movement of the two tRNA molecules, the mRNA and conformational changes in the ribosome. The sequence is that of Elongation factor G from Bacillus mycoides (strain KBAB4) (Bacillus weihenstephanensis).